Here is a 244-residue protein sequence, read N- to C-terminus: uncharacterized protein (244 aa).

Composition is skewed to basic and acidic residues over residues 1–10 (MNDPFARMET) and 100–127 (GTRG…HGEE). 3 disordered regions span residues 1–79 (MNDP…GEEL), 100–130 (GTRG…EPNY), and 219–244 (TGAS…EIKL).

This is an uncharacterized protein from Homo sapiens (Human).